We begin with the raw amino-acid sequence, 361 residues long: Phospho-N-acetylmuramoyl-pentapeptide-transferase (361 aa).

The next 10 membrane-spanning stretches (helical) occupy residues Arg25 to Ile45, Thr73 to Leu93, Tyr97 to Trp117, Tyr134 to Leu154, Ala168 to Ala188, Gly200 to Ala220, Ala237 to Phe257, Val264 to Val284, Ile289 to Val309, and Gln338 to Leu358.

It belongs to the glycosyltransferase 4 family. MraY subfamily. Mg(2+) is required as a cofactor.

It localises to the cell inner membrane. The enzyme catalyses UDP-N-acetyl-alpha-D-muramoyl-L-alanyl-gamma-D-glutamyl-meso-2,6-diaminopimeloyl-D-alanyl-D-alanine + di-trans,octa-cis-undecaprenyl phosphate = di-trans,octa-cis-undecaprenyl diphospho-N-acetyl-alpha-D-muramoyl-L-alanyl-D-glutamyl-meso-2,6-diaminopimeloyl-D-alanyl-D-alanine + UMP. The protein operates within cell wall biogenesis; peptidoglycan biosynthesis. Catalyzes the initial step of the lipid cycle reactions in the biosynthesis of the cell wall peptidoglycan: transfers peptidoglycan precursor phospho-MurNAc-pentapeptide from UDP-MurNAc-pentapeptide onto the lipid carrier undecaprenyl phosphate, yielding undecaprenyl-pyrophosphoryl-MurNAc-pentapeptide, known as lipid I. The sequence is that of Phospho-N-acetylmuramoyl-pentapeptide-transferase from Thiobacillus denitrificans (strain ATCC 25259 / T1).